A 1413-amino-acid polypeptide reads, in one-letter code: Sushi, nidogen and EGF-like domain-containing protein 1 (1413 aa).

The signal sequence occupies residues 1-24 (MRHGVAWALLVAAALGLGARGVRG). Residues 103-258 (AFWADVDNRR…GRWAFRIDDA (156 aa)) enclose the NIDO domain. N-linked (GlcNAc...) asparagine glycans are attached at residues N145 and N204. EGF-like domains follow at residues 268-309 (TTSV…RRCH), 311-347 (DVNECASQPCQNGGTCTHGINSFRCQCPAGFGGPTCE), and 349-385 (AQSPCDTKECQHGGQCQVENGSAVCVCQAGYTGAACE). Intrachain disulfides connect C272/C284, C278/C297, C299/C308, C315/C326, C320/C335, C337/C346, C353/C364, C358/C373, C375/C384, C391/C402, C396/C411, C413/C422, C433/C444, C438/C453, C455/C464, C472/C480, C474/C488, and C490/C499. N292 is a glycosylation site (N-linked (GlcNAc...) asparagine). Residues 352-374 (PCDTKECQHGGQCQVENGSAVCV) form the Follistatin-like 1 domain. N-linked (GlcNAc...) asparagine glycosylation occurs at N368. Positions 387-423 (DVDDCSPDPCLNGGSCVDLVGNYTCLCAEPFKGLRCE) constitute an EGF-like 4; calcium-binding domain. N408 carries an N-linked (GlcNAc...) asparagine glycan. 2 consecutive EGF-like domains span residues 429–465 (VPDACLSAPCHNGGTCVDADQGYVCECPEGFMGLDCR) and 468–500 (VPDDCECRNGGRCLGANTTLCQCPLGFFGLLCE). An N-linked (GlcNAc...) asparagine glycan is attached at N484. Residues 507-530 (PCNMNTQCPDGGYCMEHGGSYLCV) form the Follistatin-like 2 domain. N536 carries an N-linked (GlcNAc...) asparagine glycan. EGF-like domains follow at residues 541–577 (LPSPCDSDPCFNGGSCDAHDDSYTCECPRGFHGKHCE), 580–616 (RPHLCSSGPCRNGGTCKEAGGEYHCSCPYRFTGRHCE), 619–655 (KPDSCASGPCHNGGTCFHYIGKYKCDCPPGFSGRHCE), and 657–693 (APSPCFRSPCVNGGTCEDRDTDFFCHCQAGYMGRRCQ). Intrachain disulfides connect C545–C556, C550–C565, C567–C576, C584–C595, C589–C604, C606–C615, C623–C634, C628–C643, C645–C654, C661–C672, C666–C681, C683–C692, C698–C739, C724–C751, C757–C768, C762–C777, C779–C788, C795–C806, C800–C815, C817–C826, C833–C844, C838–C853, C855–C864, C871–C882, C876–C891, and C893–C902. Residues 696–753 (VDCGPPEEVKHATLRFNGTRLGAVALYACDRGYSLSAPSRIRVCQPHGVWSEPPQCLE) enclose the Sushi domain. N712 is a glycosylation site (N-linked (GlcNAc...) asparagine). One can recognise an EGF-like 11; calcium-binding domain in the interval 753-789 (EIDECRSQPCLHGGSCQDRVAGYLCLCSTGYEGAHCE). Residues 791–827 (ERDECRAHPCRNGGSCRNLPGAYVCRCPAGFVGVHCE) form the EGF-like 12; calcium-binding domain. 2 EGF-like domains span residues 829-865 (EVDACDSSPCQHGGRCESGGGAYLCVCPESFFGYHCE) and 867-903 (VSDPCFSSPCGGRGYCLASNGSHSCTCKVGYTGEDCA). N-linked (GlcNAc...) asparagine glycosylation is present at N886. Fibronectin type-III domains are found at residues 908–1006 (PPTA…TRPR), 1007–1105 (PVEG…TRPL), and 1106–1200 (PPAN…SPRD). Residues N977, N1015, N1109, and N1139 are each glycosylated (N-linked (GlcNAc...) asparagine). The disordered stretch occupies residues 1206-1226 (WHQGGHHPRVLKNRPPPARLP). The segment covering 1207–1217 (HQGGHHPRVLK) has biased composition (basic residues). The region spanning 1307–1343 (VPGNCSENPCQNGGTCVPGADAHSCDCGPGFKGRRCE) is the EGF-like 15 domain. N-linked (GlcNAc...) asparagine glycosylation occurs at N1310. Cystine bridges form between C1311–C1322, C1316–C1331, and C1333–C1342. The disordered stretch occupies residues 1394-1413 (TSLKKTPNRKQSKSQTLEKS).

Phosphorylated on serine and threonine residues. In terms of processing, N-glycosylated.

It is found in the secreted. Its subcellular location is the extracellular space. The protein resides in the extracellular matrix. The chain is Sushi, nidogen and EGF-like domain-containing protein 1 from Homo sapiens (Human).